Reading from the N-terminus, the 762-residue chain is 5-methyltetrahydropteroyltriglutamate--homocysteine methyltransferase (762 aa).

5-methyltetrahydropteroyltri-L-glutamate contacts are provided by residues 18 to 21 (REWK) and lysine 112. L-homocysteine-binding positions include 435 to 437 (IGS) and glutamate 488. Residues 435 to 437 (IGS) and glutamate 488 contribute to the L-methionine site. 5-methyltetrahydropteroyltri-L-glutamate-binding positions include 519–520 (RC) and tryptophan 565. Aspartate 603 provides a ligand contact to L-homocysteine. An L-methionine-binding site is contributed by aspartate 603. Glutamate 609 is a binding site for 5-methyltetrahydropteroyltri-L-glutamate. Residues histidine 645, cysteine 647, and glutamate 669 each contribute to the Zn(2+) site. The Proton donor role is filled by histidine 698. Cysteine 719 is modified (S-bacillithiol cysteine disulfide). Zn(2+) is bound at residue cysteine 730.

Belongs to the vitamin-B12 independent methionine synthase family. It depends on Zn(2+) as a cofactor. In response to oxidative stress, Cys-719 can react with bacillithiol (BSH) to form mixed disulfides. S-bacillithiolation leads to loss of catalytic activity and methionine auxotrophy.

The catalysed reaction is 5-methyltetrahydropteroyltri-L-glutamate + L-homocysteine = tetrahydropteroyltri-L-glutamate + L-methionine. Its pathway is amino-acid biosynthesis; L-methionine biosynthesis via de novo pathway; L-methionine from L-homocysteine (MetE route): step 1/1. Functionally, catalyzes the transfer of a methyl group from 5-methyltetrahydrofolate to homocysteine resulting in methionine formation. The polypeptide is 5-methyltetrahydropteroyltriglutamate--homocysteine methyltransferase (Bacillus subtilis (strain 168)).